A 162-amino-acid polypeptide reads, in one-letter code: Iron-sulfur cluster assembly protein IscU (162 aa).

The protein belongs to the NifU family. Homotrimer. Small proportion is monomeric. Interacts with IscS. Interacts with ABCB6. Component of a complex, at least composed of IscS, Isd11 and IscU. [4Fe-4S] cluster is required as a cofactor.

It localises to the mitochondrion. It participates in cofactor biosynthesis; iron-sulfur cluster biosynthesis. Participates in iron-sulfur cluster formation (ISC) pathway for iron-sulfur (Fe-S) cluster biogenesis. Plays a role of a major scaffold protein for [Fe-S] assembly; assembles [4Fe-4S] clusters directly upon interaction with the catalytic component IscS-Isd11 as part of the scaffold complex. Can transfer [4Fe-4S] clusters to target apo-proteins. This is Iron-sulfur cluster assembly protein IscU from Plasmodium falciparum (isolate 3D7).